The following is a 345-amino-acid chain: tRNA pseudouridine synthase B (345 aa).

Residue Asp-39 is the Nucleophile of the active site.

Belongs to the pseudouridine synthase TruB family. Type 1 subfamily.

It carries out the reaction uridine(55) in tRNA = pseudouridine(55) in tRNA. Responsible for synthesis of pseudouridine from uracil-55 in the psi GC loop of transfer RNAs. The protein is tRNA pseudouridine synthase B of Rickettsia rickettsii (strain Iowa).